The following is a 316-amino-acid chain: Ribosomal protein L11 methyltransferase (316 aa).

The S-adenosyl-L-methionine site is built by Thr160, Gly181, Asp203, and Asn246.

The protein belongs to the methyltransferase superfamily. PrmA family.

It is found in the cytoplasm. The enzyme catalyses L-lysyl-[protein] + 3 S-adenosyl-L-methionine = N(6),N(6),N(6)-trimethyl-L-lysyl-[protein] + 3 S-adenosyl-L-homocysteine + 3 H(+). Its function is as follows. Methylates ribosomal protein L11. The polypeptide is Ribosomal protein L11 methyltransferase (Heliobacterium modesticaldum (strain ATCC 51547 / Ice1)).